We begin with the raw amino-acid sequence, 466 residues long: Trigger factor (466 aa).

A PPIase FKBP-type domain is found at Gly162–Pro243. Positions Gly428–Thr466 are disordered. Residues Ala457–Thr466 are compositionally biased toward low complexity.

It belongs to the FKBP-type PPIase family. Tig subfamily.

It is found in the cytoplasm. It catalyses the reaction [protein]-peptidylproline (omega=180) = [protein]-peptidylproline (omega=0). Involved in protein export. Acts as a chaperone by maintaining the newly synthesized protein in an open conformation. Functions as a peptidyl-prolyl cis-trans isomerase. The protein is Trigger factor of Mycobacterium tuberculosis (strain ATCC 25177 / H37Ra).